Reading from the N-terminus, the 374-residue chain is MKRMGWAVTAAVTTIVLAQSSLAAQAADSTSGWRAPSCTKVTGDGAVTFTTDDGATLAPTTGTLQSVSYTHGLVALDTPNTLLATHNDELQRSTDAGCTWTKVATLGSGSTWLTAATGGRAFAWEKNGGYLARVDGRTVTKLSSPSADIVGVGTDKARRDHVRLAGSDGQLYDSTDAGATWKPLGKLAFGPGASVYTVSFDPADLDHAVAGGMTTGGAVTTDGGATWTAATGLSATAGGKSNLFAASVSPADRNVVYALGIDLVEAAPNSGAEGRHLYRSTDGGRTYTRIVDDTPDTELTNSTLLAPSPVDPNVLYFEYGTYFQAYGTDLYRYDARTGKVGKTHNAHDGISAIAFNPARPSVMYLGLEEVQIHH.

An N-terminal signal peptide occupies residues M1–A26.

The protein localises to the secreted. Its function is as follows. Induces autolysis of dispase and thermolysin. The protein is Dispase autolysis-inducing protein (daip) of Streptomyces mobaraensis (Streptoverticillium mobaraense).